We begin with the raw amino-acid sequence, 130 residues long: MSKQIRKNVKKPRKKIYRGVVYIQTTQNNTIVTITNIKGDAVCWSSAGSCDLKGRRKATAYAAKLAAANAAKKARREFVLKEAKVLITGPGAARDTAIHEIHKAGIKLTILREKSGVPHNGCRPPKRRRV.

This sequence belongs to the universal ribosomal protein uS11 family. In terms of assembly, part of the 30S ribosomal subunit.

It is found in the plastid. The protein resides in the chloroplast. This chain is Small ribosomal subunit protein uS11c, found in Stigeoclonium helveticum (Green alga).